We begin with the raw amino-acid sequence, 735 residues long: DNA ligase 1 (735 aa).

Over residues 1–11 (MAGDKQGDKQA) the composition is skewed to basic and acidic residues. A disordered region spans residues 1–23 (MAGDKQGDKQAETTSVPAEARER). NAD(+) is bound by residues 48 to 52 (DAEFD), 97 to 98 (SL), and Glu-128. Lys-130 functions as the N6-AMP-lysine intermediate in the catalytic mechanism. NAD(+) is bound by residues Arg-151, Glu-188, Lys-305, and Lys-329. Residues Cys-423, Cys-426, Cys-442, and Cys-448 each contribute to the Zn(2+) site. In terms of domain architecture, BRCT spans 643–732 (EGPRPLEGLT…PEAAADVALS (90 aa)).

This sequence belongs to the NAD-dependent DNA ligase family. LigA subfamily. The cofactor is Mg(2+). Mn(2+) serves as cofactor.

It catalyses the reaction NAD(+) + (deoxyribonucleotide)n-3'-hydroxyl + 5'-phospho-(deoxyribonucleotide)m = (deoxyribonucleotide)n+m + AMP + beta-nicotinamide D-nucleotide.. In terms of biological role, DNA ligase that catalyzes the formation of phosphodiester linkages between 5'-phosphoryl and 3'-hydroxyl groups in double-stranded DNA using NAD as a coenzyme and as the energy source for the reaction. It is essential for DNA replication and repair of damaged DNA. The chain is DNA ligase 1 from Streptomyces coelicolor (strain ATCC BAA-471 / A3(2) / M145).